We begin with the raw amino-acid sequence, 145 residues long: Histone H3-like centromeric protein A (145 aa).

Residues 1–19 (MPRHTSAHKRKPSTPRRRS) show a composition bias toward basic residues. The interval 1–54 (MPRHTSAHKRKPSTPRRRSPPASLPPPAGSRTRRHSGPSGSSPRKKHKFRPGTR) is disordered. Phosphoserine is present on Ser19. The tract at residues 51-145 (PGTRALMEIR…ARRIRGVEHM (95 aa)) is H3-like.

This sequence belongs to the histone H3 family. In terms of assembly, component of centromeric nucleosomes, where DNA is wrapped around a histone octamer core. The octamer contains two molecules each of H2A, H2B, CENPA and H4 assembled in one CENPA-H4 heterotetramer and two H2A-H2B heterodimers. CENPA modulates the DNA-binding characteristics of nucleosomes so that protruding DNA ends have higher flexibility than in nucleosomes containing conventional histone H3.

It is found in the nucleus. It localises to the chromosome. The protein localises to the centromere. In terms of biological role, histone H3-like nucleosomal protein that is specifically found in centromeric nucleosomes. Replaces conventional H3 in the nucleosome core of centromeric chromatin that serves as an assembly site for the inner kinetochore. The presence of CENPA subtly modifies the nucleosome structure and the way DNA is wrapped around the nucleosome and gives rise to protruding DNA ends that are less well-ordered and rigid compared to nucleosomes containing histone H3. May serve as an epigenetic mark that propagates centromere identity through replication and cell division. Required for recruitment and assembly of kinetochore proteins, and as a consequence required for progress through mitosis, chromosome segregation and cytokinesis. This Danio rerio (Zebrafish) protein is Histone H3-like centromeric protein A (cenpa).